We begin with the raw amino-acid sequence, 580 residues long: Laccase-5 (580 aa).

Residues 1 to 25 form the signal peptide; the sequence is MDVTKSLLCFISFVAFLLFSSVAEA. Plastocyanin-like domains lie at 34 to 150 and 160 to 312; these read IIQA…PPAG and RNVP…YKSA. Asn80 carries N-linked (GlcNAc...) asparagine glycosylation. Cu cation-binding residues include His84, His86, His129, and His131. N-linked (GlcNAc...) asparagine glycosylation is found at Asn189, Asn300, Asn340, Asn392, Asn402, Asn410, and Asn443. The region spanning 428–564 is the Plastocyanin-like 3 domain; that stretch reads DFPAKPPVKF…AMAFLVENGN (137 aa). Residues His481, His484, His486, His543, Cys544, His545, and His549 each coordinate Cu cation.

It belongs to the multicopper oxidase family. The cofactor is Cu cation. As to expression, ubiquitous and constitutive.

It localises to the secreted. The protein resides in the extracellular space. The protein localises to the apoplast. The catalysed reaction is 4 hydroquinone + O2 = 4 benzosemiquinone + 2 H2O. Its function is as follows. Lignin degradation and detoxification of lignin-derived products. This chain is Laccase-5 (LAC5), found in Arabidopsis thaliana (Mouse-ear cress).